Consider the following 456-residue polypeptide: MPASTSIPETPSKLPDALLVNSDPASKVDNVSVKIEQESPLALEGSPLPTVSDVLPETNNAHEEVSSSSWSLSSSDSIMSYDSLSDDVSVLSFLDCPLTTFETAPSIASFSNSAADVSSHSRSSSSWSAKLSRFTKHASKPSLSSNSSDSSFSKSGSESNALSSRGSFELEPHGIHRHVSRAKRLLSKFYSKFHHKKEDSSFDPLAPLVFAPNTSRVLRVTNEANASAISLEKATSLSSQEQPGSEIKKELSLYDHEFDQILDLAIKAKKDGNLENAIEFLEYIMPEVASQQNFVPYELAELYKQRGTSQDLKSILPLYMLAASLGHDRSSFLVGEAFFYGTYGARENKLRALQYYHLANDKGNADAMLALCKLYLRGLPGHIFPSSRRAFEYAHRAAMLGHAPACYVLGKFYETGVGCVKDLAKSEAGFRAGLINDSPITDADALQIASTLVLLQ.

Disordered stretches follow at residues 1–20, 38–74, and 139–158; these read MPASTSIPETPSKLPDALLV, ESPLALEGSPLPTVSDVLPETNNAHEEVSSSSWSLSS, and SKPSLSSNSSDSSFSKSGSE. Residues 140–158 show a composition bias toward low complexity; sequence KPSLSSNSSDSSFSKSGSE. S227 and S230 each carry phosphoserine. Sel1-like repeat units follow at residues 293-327, 328-364, 365-402, and 403-438; these read NFVPYELAELYKQRGTSQDLKSILPLYMLAASLGH, DRSSFLVGEAFFYGTYGARENKLRALQYYHLANDKGN, ADAMLALCKLYLRGLPGHIFPSSRRAFEYAHRAAMLGH, and APACYVLGKFYETGVGCVKDLAKSEAGFRAGLINDS.

Involved in chitin biosynthesis. This chain is Chitin synthase regulatory factor 1 (chr1), found in Schizosaccharomyces pombe (strain 972 / ATCC 24843) (Fission yeast).